Reading from the N-terminus, the 343-residue chain is UDP-N-acetylglucosamine--N-acetylmuramyl-(pentapeptide) pyrophosphoryl-undecaprenol N-acetylglucosamine transferase (343 aa).

UDP-N-acetyl-alpha-D-glucosamine contacts are provided by residues 10–12 (TGG), N113, S174, and Q275.

It belongs to the glycosyltransferase 28 family. MurG subfamily.

It is found in the cell membrane. It carries out the reaction di-trans,octa-cis-undecaprenyl diphospho-N-acetyl-alpha-D-muramoyl-L-alanyl-D-glutamyl-meso-2,6-diaminopimeloyl-D-alanyl-D-alanine + UDP-N-acetyl-alpha-D-glucosamine = di-trans,octa-cis-undecaprenyl diphospho-[N-acetyl-alpha-D-glucosaminyl-(1-&gt;4)]-N-acetyl-alpha-D-muramoyl-L-alanyl-D-glutamyl-meso-2,6-diaminopimeloyl-D-alanyl-D-alanine + UDP + H(+). It functions in the pathway cell wall biogenesis; peptidoglycan biosynthesis. Cell wall formation. Catalyzes the transfer of a GlcNAc subunit on undecaprenyl-pyrophosphoryl-MurNAc-pentapeptide (lipid intermediate I) to form undecaprenyl-pyrophosphoryl-MurNAc-(pentapeptide)GlcNAc (lipid intermediate II). The protein is UDP-N-acetylglucosamine--N-acetylmuramyl-(pentapeptide) pyrophosphoryl-undecaprenol N-acetylglucosamine transferase of Wolbachia sp. subsp. Brugia malayi (strain TRS).